Consider the following 704-residue polypeptide: Myb-related protein B (704 aa).

3 consecutive HTH myb-type domains span residues 26–77 (RDNR…LRVL), 78–133 (NPDL…NPEV), and 134–184 (KKSC…KRKV). The H-T-H motif DNA-binding region spans 54–77 (WKFLASHFPNRTDQQCQYRWLRVL). Lysine 104 participates in a covalent cross-link: Glycyl lysine isopeptide (Lys-Gly) (interchain with G-Cter in SUMO2). 2 consecutive DNA-binding regions (H-T-H motif) follow at residues 106–129 (WTLI…HNHL) and 157–180 (WAEI…NSTI). Lysine 197 is covalently cross-linked (Glycyl lysine isopeptide (Lys-Gly) (interchain with G-Cter in SUMO2)). The residue at position 267 (threonine 267) is a Phosphothreonine. Lysine 275 is covalently cross-linked (Glycyl lysine isopeptide (Lys-Gly) (interchain with G-Cter in SUMO2)). At serine 282 the chain carries Phosphoserine. The tract at residues 325–412 (LSKFDLPEEP…GSGIGTPPSV (88 aa)) is disordered. Positions 339-366 (SVVSSPVQPQTSQQQQEEALQSSQQAAT) are enriched in low complexity. Phosphoserine is present on serine 396. Lysine 414 participates in a covalent cross-link: Glycyl lysine isopeptide (Lys-Gly) (interchain with G-Cter in SUMO2). A phosphothreonine; by CDK2 mark is found at threonine 443 and threonine 447. Residues lysine 450 and lysine 485 each participate in a glycyl lysine isopeptide (Lys-Gly) (interchain with G-Cter in SUMO2) cross-link. Phosphothreonine; by CDK2 is present on residues threonine 490 and threonine 497. Glycyl lysine isopeptide (Lys-Gly) (interchain with G-Cter in SUMO2) cross-links involve residues lysine 502 and lysine 513. Threonine 524 is subject to Phosphothreonine; by CDK2. Glycyl lysine isopeptide (Lys-Gly) (interchain with G-Cter in SUMO2) cross-links involve residues lysine 527, lysine 537, and lysine 550. Position 581 is a phosphoserine; by CDK2 (serine 581). Glycyl lysine isopeptide (Lys-Gly) (interchain with G-Cter in SUMO2) cross-links involve residues lysine 588 and lysine 600. Residues 603–626 (SSTMPKPLSLPTSVTPSSCGFTSP) are disordered. Over residues 607–620 (PKPLSLPTSVTPSS) the composition is skewed to low complexity. Residues lysine 629, lysine 643, and lysine 652 each participate in a glycyl lysine isopeptide (Lys-Gly) (interchain with G-Cter in SUMO2) cross-link.

In terms of assembly, component of the DREAM complex (also named LINC complex) at least composed of E2F4, E2F5, LIN9, LIN37, LIN52, LIN54, MYBL1, MYBL2, RBL1, RBL2, RBBP4, TFDP1 and TFDP2. The complex exists in quiescent cells where it represses cell cycle-dependent genes. It dissociates in S phase when LIN9, LIN37, LIN52 and LIN54 form a subcomplex that binds to MYBL2. Interacts with CCNF (via the Cyclin N-terminal domain). In terms of processing, phosphorylated by cyclin A/CDK2 during S-phase. Phosphorylation at Thr-524 is probably involved in transcriptional activity.

The protein localises to the nucleus. Its function is as follows. Transcription factor involved in the regulation of cell survival, proliferation, and differentiation. Transactivates the expression of the CLU gene. This chain is Myb-related protein B (Mybl2), found in Mus musculus (Mouse).